The sequence spans 347 residues: NADH-ubiquinone oxidoreductase chain 2 (347 aa).

11 consecutive transmembrane segments (helical) span residues 3–23 (PVVLTMILLTIMLGTVIVMTT), 25–45 (HWLLVWIGFEMNMLAIIPILM), 59–79 (YFLTQATASMLLMLAIVINLI), 96–116 (IIMTLALAMKLGLAPFHFWVP), 122–142 (IQLSSGLILLTWQKLAPMSIL), 149–169 (INLHLLLLMSLTSILIGGWGG), 178–198 (IMAYSSIAHMGWMTTIMIYNP), 200–220 (MALLNLTIYIILTTTTFMTFM), 237–257 (MPLLTSAVLMTMLSLGGLPPL), 274–294 (NSIIMPTIMAITALLNLFFYM), and 325–345 (LLSPMIILSTLILPLSPMLAL).

The protein belongs to the complex I subunit 2 family. In terms of assembly, core subunit of respiratory chain NADH dehydrogenase (Complex I) which is composed of 45 different subunits. Interacts with TMEM242.

It localises to the mitochondrion inner membrane. It catalyses the reaction a ubiquinone + NADH + 5 H(+)(in) = a ubiquinol + NAD(+) + 4 H(+)(out). In terms of biological role, core subunit of the mitochondrial membrane respiratory chain NADH dehydrogenase (Complex I) which catalyzes electron transfer from NADH through the respiratory chain, using ubiquinone as an electron acceptor. Essential for the catalytic activity and assembly of complex I. This is NADH-ubiquinone oxidoreductase chain 2 from Paranyctimene raptor (Unstriped tube-nosed fruit bat).